We begin with the raw amino-acid sequence, 184 residues long: uncharacterized protein (184 aa).

The first 20 residues, 1–20 (MKKQILALVCGVIFSSSTWA), serve as a signal peptide directing secretion.

This sequence to E.coli YtfJ.

The protein localises to the periplasm. This is an uncharacterized protein from Haemophilus influenzae (strain ATCC 51907 / DSM 11121 / KW20 / Rd).